We begin with the raw amino-acid sequence, 86 residues long: uncharacterized protein (86 aa).

The N-terminal stretch at 1–25 is a signal peptide; the sequence is MNLRKILLSSALSLGMLVSAAPVLA.

This is an uncharacterized protein from Bacillus subtilis (strain 168).